The chain runs to 369 residues: Phenylalanine--tRNA ligase alpha subunit (369 aa).

Glutamate 269 is a Mg(2+) binding site.

This sequence belongs to the class-II aminoacyl-tRNA synthetase family. Phe-tRNA synthetase alpha subunit type 1 subfamily. As to quaternary structure, tetramer of two alpha and two beta subunits. Mg(2+) is required as a cofactor.

Its subcellular location is the cytoplasm. It catalyses the reaction tRNA(Phe) + L-phenylalanine + ATP = L-phenylalanyl-tRNA(Phe) + AMP + diphosphate + H(+). This chain is Phenylalanine--tRNA ligase alpha subunit, found in Brucella melitensis biotype 1 (strain ATCC 23456 / CCUG 17765 / NCTC 10094 / 16M).